The following is a 337-amino-acid chain: Holliday junction branch migration complex subunit RuvB (337 aa).

The interval 4-184 (ADRLIQPQVL…FGIPLRLEFY (181 aa)) is large ATPase domain (RuvB-L). ATP contacts are provided by residues R24, G65, K68, T69, T70, 131–133 (EDY), R174, Y184, and R221. Position 69 (T69) interacts with Mg(2+). A small ATPAse domain (RuvB-S) region spans residues 185–255 (NVKDLCTIVT…VAQQALDMLD (71 aa)). The tract at residues 258-337 (QEGFDYLDRK…FNIITPDVPK (80 aa)) is head domain (RuvB-H). 3 residues coordinate DNA: R294, R313, and R318.

It belongs to the RuvB family. In terms of assembly, homohexamer. Forms an RuvA(8)-RuvB(12)-Holliday junction (HJ) complex. HJ DNA is sandwiched between 2 RuvA tetramers; dsDNA enters through RuvA and exits via RuvB. An RuvB hexamer assembles on each DNA strand where it exits the tetramer. Each RuvB hexamer is contacted by two RuvA subunits (via domain III) on 2 adjacent RuvB subunits; this complex drives branch migration. In the full resolvosome a probable DNA-RuvA(4)-RuvB(12)-RuvC(2) complex forms which resolves the HJ.

The protein localises to the cytoplasm. The catalysed reaction is ATP + H2O = ADP + phosphate + H(+). In terms of biological role, the RuvA-RuvB-RuvC complex processes Holliday junction (HJ) DNA during genetic recombination and DNA repair, while the RuvA-RuvB complex plays an important role in the rescue of blocked DNA replication forks via replication fork reversal (RFR). RuvA specifically binds to HJ cruciform DNA, conferring on it an open structure. The RuvB hexamer acts as an ATP-dependent pump, pulling dsDNA into and through the RuvAB complex. RuvB forms 2 homohexamers on either side of HJ DNA bound by 1 or 2 RuvA tetramers; 4 subunits per hexamer contact DNA at a time. Coordinated motions by a converter formed by DNA-disengaged RuvB subunits stimulates ATP hydrolysis and nucleotide exchange. Immobilization of the converter enables RuvB to convert the ATP-contained energy into a lever motion, pulling 2 nucleotides of DNA out of the RuvA tetramer per ATP hydrolyzed, thus driving DNA branch migration. The RuvB motors rotate together with the DNA substrate, which together with the progressing nucleotide cycle form the mechanistic basis for DNA recombination by continuous HJ branch migration. Branch migration allows RuvC to scan DNA until it finds its consensus sequence, where it cleaves and resolves cruciform DNA. This chain is Holliday junction branch migration complex subunit RuvB, found in Shewanella denitrificans (strain OS217 / ATCC BAA-1090 / DSM 15013).